The primary structure comprises 83 residues: Evasin P1124 (83 aa).

Positions 1 to 28 (MAVNVFTILQLAVFAAIVLNVNLHSVSA) are cleaved as a signal peptide. 3 cysteine pairs are disulfide-bonded: Cys-48–Cys-66, Cys-52–Cys-68, and Cys-62–Cys-79. The N-linked (GlcNAc...) asparagine glycan is linked to Asn-51.

The protein resides in the secreted. In terms of biological role, salivary chemokine-binding protein which binds to host chemokines CXCL1, CXCL2, CXCL3, CXCL5, CXCL6, CXCL12 and CXCL13. The sequence is that of Evasin P1124 from Ixodes ricinus (Common tick).